A 482-amino-acid chain; its full sequence is tRNA sulfurtransferase (482 aa).

One can recognise a THUMP domain in the interval 61-165; the sequence is LAIRDALTRI…DDRLLLIKGR (105 aa). Residues 183-184, Lys-265, Gly-287, and Gln-296 each bind ATP; that span reads LI. Cys-344 and Cys-456 are disulfide-bonded. The 79-residue stretch at 404 to 482 folds into the Rhodanese domain; it reads FGPNDVILDI…GFNNVKVYRP (79 aa). The Cysteine persulfide intermediate role is filled by Cys-456.

This sequence belongs to the ThiI family.

It is found in the cytoplasm. It carries out the reaction [ThiI sulfur-carrier protein]-S-sulfanyl-L-cysteine + a uridine in tRNA + 2 reduced [2Fe-2S]-[ferredoxin] + ATP + H(+) = [ThiI sulfur-carrier protein]-L-cysteine + a 4-thiouridine in tRNA + 2 oxidized [2Fe-2S]-[ferredoxin] + AMP + diphosphate. It catalyses the reaction [ThiS sulfur-carrier protein]-C-terminal Gly-Gly-AMP + S-sulfanyl-L-cysteinyl-[cysteine desulfurase] + AH2 = [ThiS sulfur-carrier protein]-C-terminal-Gly-aminoethanethioate + L-cysteinyl-[cysteine desulfurase] + A + AMP + 2 H(+). It participates in cofactor biosynthesis; thiamine diphosphate biosynthesis. Its function is as follows. Catalyzes the ATP-dependent transfer of a sulfur to tRNA to produce 4-thiouridine in position 8 of tRNAs, which functions as a near-UV photosensor. Also catalyzes the transfer of sulfur to the sulfur carrier protein ThiS, forming ThiS-thiocarboxylate. This is a step in the synthesis of thiazole, in the thiamine biosynthesis pathway. The sulfur is donated as persulfide by IscS. The protein is tRNA sulfurtransferase of Escherichia coli (strain 55989 / EAEC).